Here is a 590-residue protein sequence, read N- to C-terminus: MELENIVANTVLLKAREGGGGKRKGKSKKWKEILKFPHINQCEDLRRTIDRDYCSLCDKQPVGRLLFRQFCETRPGLESYIQFLDSVAEYEVTPDEKLGEKGKEIMTKYLTPKSPVFITQVGRDLVSQTEEKLLQKPCKELFSACVQSVHDYLRGEPFHEYLDSMYFDRFLQWKWLERQPVTKNTFRQYRVLGKGGFGEVCACQVRATGKMYACKRLEKKRIKKRKGESMALNEKQILEKVNSRFVVNLAYAYETKDALCLVLTIMNGGDLKFHIYNMGNPGFEEERALFYAAEILCGLEDLHHENIVYRDLKPENILLDDYGHIRISDLGLAVKIPEGDLIRGRVGTVGYMAPEVLNNQRYGLSPDYWGLGCLIYEMIEGQSPFRGRKEKVKREEVDRRVLETEEVYSHKFSEEAKSICKMLLTKDAKQRLGCQEEGAAEVKRHPFFRNMNFKRLEAGMLDPPFVPDPRAVYCKDVLDIEQFSTVKGVNLDHTDDDFYSKFSTGSVPIPWQSEMIETECFKELNVFGPHGTLSPDLNRSHPPEPPKKGLLQRLFKRQHQNNSKSSPNSKTSFNHHINSNHVSSNSTGSS.

The tract at residues 1-185 is N-terminal; it reads MELENIVANT…LERQPVTKNT (185 aa). The tract at residues 20–39 is interaction with calmodulin; it reads GGKRKGKSKKWKEILKFPHI. Residues 53–171 enclose the RGS domain; it reads YCSLCDKQPV…LDSMYFDRFL (119 aa). A Protein kinase domain is found at 186-448; the sequence is FRQYRVLGKG…AAEVKRHPFF (263 aa). Residues 192–200 and lysine 215 contribute to the ATP site; that span reads LGKGGFGEV. Aspartate 311 acts as the Proton acceptor in catalysis. Positions 388–395 match the Nuclear localization signal motif; that stretch reads RKEKVKRE. The AGC-kinase C-terminal domain occupies 449–514; that stretch reads RNMNFKRLEA…GSVPIPWQSE (66 aa). Serine 484 carries the phosphoserine; by autocatalysis modification. Threonine 485 carries the post-translational modification Phosphothreonine; by autocatalysis. Residues 546 to 565 form a sufficient for membrane localization region; that stretch reads PKKGLLQRLFKRQHQNNSKS. Residues 554 to 590 form a disordered region; that stretch reads LFKRQHQNNSKSSPNSKTSFNHHINSNHVSSNSTGSS. The span at 561–590 shows a compositional bias: low complexity; that stretch reads NNSKSSPNSKTSFNHHINSNHVSSNSTGSS. At serine 579 the chain carries Phosphoserine.

The protein belongs to the protein kinase superfamily. AGC Ser/Thr protein kinase family. GPRK subfamily. In terms of assembly, interacts with ST13 (via the C-terminus 303-319 AA). Interacts with TP53/p53. Interacts with HTR4 (via C-terminus 330-346 AA); this interaction is promoted by 5-HT (serotonin). Interacts with HDAC5. Interacts with GIT1. Autophosphorylated. Autophosphorylation may play a critical role in the regulation of GRK5 kinase activity. As to expression, highest levels in lung, heart, retina, lingual epithelium. Very little in brain, liver, kidney.

It is found in the cytoplasm. Its subcellular location is the nucleus. The protein localises to the cell membrane. It carries out the reaction [G-protein-coupled receptor] + ATP = [G-protein-coupled receptor]-phosphate + ADP + H(+). Inhibited by calmodulin with an IC(50) of 50 nM. Calmodulin inhibits GRK5 association with receptor and phospholipid. In terms of biological role, serine/threonine kinase that phosphorylates preferentially the activated forms of a variety of G-protein-coupled receptors (GPCRs). Such receptor phosphorylation initiates beta-arrestin-mediated receptor desensitization, internalization, and signaling events leading to their down-regulation. Phosphorylates a variety of GPCRs, including adrenergic receptors (Beta-2 adrenergic receptor), muscarinic acetylcholine receptors (more specifically Gi-coupled M2/M4 subtypes), dopamine receptors and opioid receptors. In addition to GPCRs, also phosphorylates various substrates: Hsc70-interacting protein/ST13, TP53/p53, HDAC5, and arrestin-1/ARRB1. Phosphorylation of ARRB1 by GRK5 inhibits G-protein independent MAPK1/MAPK3 signaling downstream of 5HT4-receptors. Phosphorylation of HDAC5, a repressor of myocyte enhancer factor 2 (MEF2) leading to nuclear export of HDAC5 and allowing MEF2-mediated transcription. Phosphorylation of TP53/p53, a crucial tumor suppressor, inhibits TP53/p53-mediated apoptosis. Phosphorylation of ST13 regulates internalization of the chemokine receptor. Phosphorylates rhodopsin (RHO) (in vitro) and a non G-protein-coupled receptor, LRP6 during Wnt signaling (in vitro). This chain is G protein-coupled receptor kinase 5 (GRK5), found in Bos taurus (Bovine).